The sequence spans 104 residues: L-rhamnose mutarotase (104 aa).

Tyr18 contributes to the substrate binding site. Catalysis depends on His22, which acts as the Proton donor. Substrate-binding positions include Tyr41 and 76 to 77 (WW).

The protein belongs to the rhamnose mutarotase family. Homodimer.

The protein resides in the cytoplasm. It carries out the reaction alpha-L-rhamnose = beta-L-rhamnose. It participates in carbohydrate metabolism; L-rhamnose metabolism. In terms of biological role, involved in the anomeric conversion of L-rhamnose. This is L-rhamnose mutarotase from Jannaschia sp. (strain CCS1).